Reading from the N-terminus, the 673-residue chain is Centrosomal protein kizuna (673 aa).

Disordered regions lie at residues 175 to 207, 255 to 413, 432 to 480, 494 to 516, and 613 to 673; these read TEHK…TDSC, GSNT…ALKL, QTLS…NSVK, ECGR…ILND, and SEAS…DFYD. Polar residues-rich tracts occupy residues 196–207 and 255–266; these read QTAQSSNVTDSC and GSNTRHGKSNLS. 2 stretches are compositionally biased toward basic and acidic residues: residues 267 to 293 and 303 to 316; these read EGKK…DLKC and ILTR…EKRA. A phosphoserine mark is found at S317 and S321. Positions 331–357 are enriched in basic and acidic residues; sequence SENKWSQEKHSPWEGVSDHLAHREPKS. The residue at position 379 (T379) is a Phosphothreonine; by PLK1. The segment covering 471 to 480 has biased composition (basic and acidic residues); the sequence is TLKEHDNSVK. Composition is skewed to low complexity over residues 503–512 and 613–625; these read SSESSCSLPS and SEAS…GSPL. Residues S647, S650, and S652 each carry the phosphoserine modification.

It belongs to the kizuna family. In terms of assembly, interacts with AKAP9, CEP72, ODF2, PCNT and TUBGCP2. Post-translationally, phosphorylation at Thr-379 by PLK1 is not needed for centrosomal localization or pericentriolar material expansion but is indispensable for spindle-pole stabilization.

It is found in the cytoplasm. The protein localises to the cytoskeleton. Its subcellular location is the microtubule organizing center. The protein resides in the centrosome. It localises to the cilium basal body. Centrosomal protein required for establishing a robust mitotic centrosome architecture that can endure the forces that converge on the centrosomes during spindle formation. Required for stabilizing the expanded pericentriolar material around the centriole. The sequence is that of Centrosomal protein kizuna (KIZ) from Homo sapiens (Human).